An 89-amino-acid polypeptide reads, in one-letter code: Large ribosomal subunit protein bL27 (89 aa).

Positions Met1–Gly22 are disordered.

The protein belongs to the bacterial ribosomal protein bL27 family.

This chain is Large ribosomal subunit protein bL27, found in Brucella abortus (strain S19).